The sequence spans 337 residues: Adenosine deaminase (337 aa).

Residues His-15 and His-17 each coordinate Zn(2+). Positions 17, 19, and 172 each coordinate substrate. His-199 is a Zn(2+) binding site. Glu-202 (proton donor) is an active-site residue. Asp-279 provides a ligand contact to Zn(2+).

It belongs to the metallo-dependent hydrolases superfamily. Adenosine and AMP deaminases family. Adenosine deaminase subfamily. It depends on Zn(2+) as a cofactor.

The catalysed reaction is adenosine + H2O + H(+) = inosine + NH4(+). It catalyses the reaction 2'-deoxyadenosine + H2O + H(+) = 2'-deoxyinosine + NH4(+). In terms of biological role, catalyzes the hydrolytic deamination of adenosine and 2-deoxyadenosine. This chain is Adenosine deaminase, found in Enterococcus faecalis (strain ATCC 700802 / V583).